We begin with the raw amino-acid sequence, 391 residues long: Phosphoglycerate kinase (391 aa).

Residues 21-23, Arg36, 59-62, Arg113, and Arg146 each bind substrate; these read DLN and HLGR. Residues Lys197, Glu319, and 345 to 348 contribute to the ATP site; that span reads GGDT.

Belongs to the phosphoglycerate kinase family. As to quaternary structure, monomer.

It is found in the cytoplasm. The catalysed reaction is (2R)-3-phosphoglycerate + ATP = (2R)-3-phospho-glyceroyl phosphate + ADP. Its pathway is carbohydrate degradation; glycolysis; pyruvate from D-glyceraldehyde 3-phosphate: step 2/5. In Shewanella baltica (strain OS155 / ATCC BAA-1091), this protein is Phosphoglycerate kinase.